The sequence spans 390 residues: Glucose-fructose oxidoreductase domain-containing protein 1 (390 aa).

A signal peptide spans Met-1–Leu-21.

It belongs to the Gfo/Idh/MocA family. In terms of assembly, homodimer. Interacts with NKIRAS2.

It localises to the secreted. Its function is as follows. Probably catalytically inactive enzyme. Does not bind NAD or NADP. The chain is Glucose-fructose oxidoreductase domain-containing protein 1 (Gfod1) from Mus musculus (Mouse).